A 926-amino-acid polypeptide reads, in one-letter code: DNA topoisomerase 3-alpha (926 aa).

The region spanning 10–154 (TVLNVAEKPS…NLFIRRAHFS (145 aa)) is the Toprim domain. Mg(2+)-binding residues include Glu16, Asp123, and Asp125. The region spanning 172–604 (NQLFAEAVDA…CLQQMKACFL (433 aa)) is the Topo IA-type catalytic domain. The interaction with DNA stretch occupies residues 219-224 (SYGPCQ). Catalysis depends on Tyr342, which acts as the O-(5'-phospho-DNA)-tyrosine intermediate. Residues 642–670 (CNLCNESDMALRKNRDGNFMVGCMNYPQC) form a C4-type zinc finger. Disordered regions lie at residues 740–760 (SRSQ…QGSN) and 775–806 (HAST…TVSC). Over residues 750–760 (TAPSNNIQGSN) the composition is skewed to polar residues. Residues 767–782 (CIHCQQRGHASTNCPS) form a CCHC-type 1 zinc finger. Zn(2+) is bound by residues Cys806, Cys809, Cys831, and Cys836. A GRF-type zinc finger spans residues 806 to 845 (CNTCGSQCVLRTANTEANRGRQFFSCPTQGCSFFAWEDSI). The disordered stretch occupies residues 849–890 (SGNATTGSNSGGSGRRGSRGRGRGGRGGQSSGGRRGSGTSFV). Gly residues predominate over residues 873-884 (GRGGQSSGGRRG). The CCHC-type 2 zinc finger occupies 901-917 (RCFSCGDPSHFANACPN).

This sequence belongs to the type IA topoisomerase family. As to quaternary structure, component of the RMI complex, containing at least TOP3A and RMI1. The RMI complex interacts with RECQL4A. It depends on Mg(2+) as a cofactor.

The enzyme catalyses ATP-independent breakage of single-stranded DNA, followed by passage and rejoining.. Releases the supercoiling and torsional tension of DNA introduced during the DNA replication and transcription by transiently cleaving and rejoining one strand of the DNA duplex. Introduces a single-strand break via transesterification at a target site in duplex DNA. The scissile phosphodiester is attacked by the catalytic tyrosine of the enzyme, resulting in the formation of a DNA-(5'-phosphotyrosyl)-enzyme intermediate and the expulsion of a 3'-OH DNA strand. The free DNA strand then undergoes passage around the unbroken strand thus removing DNA supercoils. Finally, in the religation step, the DNA 3'-OH attacks the covalent intermediate to expel the active-site tyrosine and restore the DNA phosphodiester backbone. Essential component of the RMI complex, a complex that plays an important role in the resolution step of homologous recombination, in a process called Holliday Junction dissolution, to limit DNA crossover formation in cells. Together with RMI1, is essential for the resolution of meiotic recombination intermediates, a step that prevents entanglement of the parental chromosomes. May have DNA decatenation activity. The protein is DNA topoisomerase 3-alpha (TOP3A) of Arabidopsis thaliana (Mouse-ear cress).